We begin with the raw amino-acid sequence, 346 residues long: Histidinol-phosphate aminotransferase (346 aa).

Lys-206 carries the N6-(pyridoxal phosphate)lysine modification.

This sequence belongs to the class-II pyridoxal-phosphate-dependent aminotransferase family. Histidinol-phosphate aminotransferase subfamily. In terms of assembly, homodimer. Pyridoxal 5'-phosphate is required as a cofactor.

The enzyme catalyses L-histidinol phosphate + 2-oxoglutarate = 3-(imidazol-4-yl)-2-oxopropyl phosphate + L-glutamate. It participates in amino-acid biosynthesis; L-histidine biosynthesis; L-histidine from 5-phospho-alpha-D-ribose 1-diphosphate: step 7/9. This chain is Histidinol-phosphate aminotransferase, found in Bacteroides thetaiotaomicron (strain ATCC 29148 / DSM 2079 / JCM 5827 / CCUG 10774 / NCTC 10582 / VPI-5482 / E50).